Consider the following 183-residue polypeptide: Adenine phosphoribosyltransferase (183 aa).

Belongs to the purine/pyrimidine phosphoribosyltransferase family. As to quaternary structure, homodimer.

The protein localises to the cytoplasm. The catalysed reaction is AMP + diphosphate = 5-phospho-alpha-D-ribose 1-diphosphate + adenine. It functions in the pathway purine metabolism; AMP biosynthesis via salvage pathway; AMP from adenine: step 1/1. In terms of biological role, catalyzes a salvage reaction resulting in the formation of AMP, that is energically less costly than de novo synthesis. The chain is Adenine phosphoribosyltransferase from Shewanella halifaxensis (strain HAW-EB4).